Reading from the N-terminus, the 198-residue chain is Glycerol-3-phosphate acyltransferase (198 aa).

6 helical membrane-spanning segments follow: residues Met-1 to Phe-21, Trp-50 to Ala-70, Asn-77 to Leu-97, Met-111 to Leu-131, Ile-136 to Ile-156, and Gly-157 to Lys-177.

This sequence belongs to the PlsY family. In terms of assembly, probably interacts with PlsX.

It is found in the cell inner membrane. It carries out the reaction an acyl phosphate + sn-glycerol 3-phosphate = a 1-acyl-sn-glycero-3-phosphate + phosphate. Its pathway is lipid metabolism; phospholipid metabolism. Its function is as follows. Catalyzes the transfer of an acyl group from acyl-phosphate (acyl-PO(4)) to glycerol-3-phosphate (G3P) to form lysophosphatidic acid (LPA). This enzyme utilizes acyl-phosphate as fatty acyl donor, but not acyl-CoA or acyl-ACP. The sequence is that of Glycerol-3-phosphate acyltransferase from Prochlorococcus marinus subsp. pastoris (strain CCMP1986 / NIES-2087 / MED4).